We begin with the raw amino-acid sequence, 158 residues long: Osmosensory protein A (158 aa).

Thr2 bears the Phosphothreonine; by PknD mark. One can recognise an STAS domain in the interval 28-139 (AQIRAYLHHL…RSVHKALHDL (112 aa)).

This sequence belongs to the anti-sigma-factor antagonist family. Interacts with Rv2638. Phosphorylation abolishes binding to Rv2638. Post-translationally, phosphorylated on Thr-2 by the serine/threonine-protein kinase PknD. Also phosphorylated to a lesser extent by PknB and PknE. Dephosphorylated by PstP.

With respect to regulation, regulated by PknD under osmotic stress. Its function is as follows. Part of a signaling pathway that enables adaptation to osmotic stress through cell wall remodeling and virulence factor production. Unphosphorylated OprA forms a complex with the anti-anti-sigma-factor paralog Rv2638 that dissociates on OprA phosphorylation by PknD. Phosphorylation of OprA may stimulate the release of SigF from an inhibitory complex and enable the transcription of osmotically regulated genes, such as oprA and the ESX-1-associated virulence factor espA. This is Osmosensory protein A from Mycobacterium tuberculosis (strain ATCC 25618 / H37Rv).